Here is a 437-residue protein sequence, read N- to C-terminus: Lipid II isoglutaminyl synthase (glutamine-hydrolyzing) subunit MurT (437 aa).

Residues C202, C205, C224, and C226 each contribute to the Zn(2+) site. The active site involves D349.

It belongs to the MurCDEF family. MurT subfamily. Forms a heterodimer with GatD.

It catalyses the reaction beta-D-GlcNAc-(1-&gt;4)-Mur2Ac(oyl-L-Ala-gamma-D-Glu-L-Lys-D-Ala-D-Ala)-di-trans,octa-cis-undecaprenyl diphosphate + L-glutamine + ATP + H2O = beta-D-GlcNAc-(1-&gt;4)-Mur2Ac(oyl-L-Ala-D-isoglutaminyl-L-Lys-D-Ala-D-Ala)-di-trans,octa-cis-undecaprenyl diphosphate + L-glutamate + ADP + phosphate + H(+). The enzyme catalyses beta-D-GlcNAc-(1-&gt;4)-Mur2Ac(oyl-L-Ala-gamma-D-Glu-L-Lys-D-Ala-D-Ala)-di-trans,octa-cis-undecaprenyl diphosphate + ATP = beta-D-GlcNAc-(1-&gt;4)-Mur2Ac(oyl-L-Ala-gamma-D-O-P-Glu-L-Lys-D-Ala-D-Ala)-di-trans,octa-cis-undecaprenyl diphosphate + ADP. It carries out the reaction beta-D-GlcNAc-(1-&gt;4)-Mur2Ac(oyl-L-Ala-gamma-D-O-P-Glu-L-Lys-D-Ala-D-Ala)-di-trans,octa-cis-undecaprenyl diphosphate + NH4(+) = beta-D-GlcNAc-(1-&gt;4)-Mur2Ac(oyl-L-Ala-D-isoglutaminyl-L-Lys-D-Ala-D-Ala)-di-trans,octa-cis-undecaprenyl diphosphate + phosphate + H(+). It functions in the pathway cell wall biogenesis; peptidoglycan biosynthesis. The lipid II isoglutaminyl synthase complex catalyzes the formation of alpha-D-isoglutamine in the cell wall lipid II stem peptide. The MurT subunit catalyzes the ATP-dependent amidation of D-glutamate residue of lipid II, converting it to an isoglutamine residue. In Staphylococcus aureus (strain COL), this protein is Lipid II isoglutaminyl synthase (glutamine-hydrolyzing) subunit MurT.